A 1578-amino-acid polypeptide reads, in one-letter code: Pentafunctional AROM polypeptide (1578 aa).

Positions 1–384 (MAEPTKIKIL…YEPKASVVPN (384 aa)) are 3-dehydroquinate synthase. Residues 44–46 (DTN), 81–84 (EVSK), 114–116 (GGV), and Asp-119 contribute to the NAD(+) site. Arg-130 provides a ligand contact to 7-phospho-2-dehydro-3-deoxy-D-arabino-heptonate. 139–140 (TT) is a binding site for NAD(+). Asp-146 and Lys-152 together coordinate 7-phospho-2-dehydro-3-deoxy-D-arabino-heptonate. Lys-161 is a binding site for NAD(+). Asn-162 is a binding site for 7-phospho-2-dehydro-3-deoxy-D-arabino-heptonate. NAD(+)-binding positions include 179–182 (FLET) and Asn-190. Glu-194 contributes to the Zn(2+) binding site. Residues 194 to 197 (EVIK) and Lys-250 each bind 7-phospho-2-dehydro-3-deoxy-D-arabino-heptonate. The Proton acceptor; for 3-dehydroquinate synthase activity role is filled by Glu-260. 7-phospho-2-dehydro-3-deoxy-D-arabino-heptonate contacts are provided by residues 264–268 (RNLLN) and His-271. Residue His-271 participates in Zn(2+) binding. Catalysis depends on His-275, which acts as the Proton acceptor; for 3-dehydroquinate synthase activity. 7-phospho-2-dehydro-3-deoxy-D-arabino-heptonate contacts are provided by His-287 and Lys-356. Residue His-287 participates in Zn(2+) binding. The tract at residues 397 to 842 (VHPGVEPASN…WDTLRQKFSA (446 aa)) is EPSP synthase. The active-site For EPSP synthase activity is Cys-824. The segment at 864–1055 (TASVFIIGMR…KRKKHSFFVS (192 aa)) is shikimate kinase. 871–878 (GMRGAGKT) contacts ATP. The tract at residues 1056–1276 (LTLPDLRTAG…AAPGQLSATE (221 aa)) is 3-dehydroquinase. Catalysis depends on His-1179, which acts as the Proton acceptor; for 3-dehydroquinate dehydratase activity. Catalysis depends on Lys-1207, which acts as the Schiff-base intermediate with substrate; for 3-dehydroquinate dehydratase activity. The shikimate dehydrogenase stretch occupies residues 1289–1578 (QKKFAVFGTP…EDARAAVLSS (290 aa)).

It in the N-terminal section; belongs to the sugar phosphate cyclases superfamily. Dehydroquinate synthase family. The protein in the 2nd section; belongs to the EPSP synthase family. In the 3rd section; belongs to the shikimate kinase family. This sequence in the 4th section; belongs to the type-I 3-dehydroquinase family. It in the C-terminal section; belongs to the shikimate dehydrogenase family. In terms of assembly, homodimer. It depends on Zn(2+) as a cofactor.

The protein resides in the cytoplasm. It carries out the reaction 7-phospho-2-dehydro-3-deoxy-D-arabino-heptonate = 3-dehydroquinate + phosphate. It catalyses the reaction 3-dehydroquinate = 3-dehydroshikimate + H2O. The catalysed reaction is shikimate + NADP(+) = 3-dehydroshikimate + NADPH + H(+). The enzyme catalyses shikimate + ATP = 3-phosphoshikimate + ADP + H(+). It carries out the reaction 3-phosphoshikimate + phosphoenolpyruvate = 5-O-(1-carboxyvinyl)-3-phosphoshikimate + phosphate. Its pathway is metabolic intermediate biosynthesis; chorismate biosynthesis; chorismate from D-erythrose 4-phosphate and phosphoenolpyruvate: step 2/7. It participates in metabolic intermediate biosynthesis; chorismate biosynthesis; chorismate from D-erythrose 4-phosphate and phosphoenolpyruvate: step 3/7. The protein operates within metabolic intermediate biosynthesis; chorismate biosynthesis; chorismate from D-erythrose 4-phosphate and phosphoenolpyruvate: step 4/7. It functions in the pathway metabolic intermediate biosynthesis; chorismate biosynthesis; chorismate from D-erythrose 4-phosphate and phosphoenolpyruvate: step 5/7. Its pathway is metabolic intermediate biosynthesis; chorismate biosynthesis; chorismate from D-erythrose 4-phosphate and phosphoenolpyruvate: step 6/7. In terms of biological role, the AROM polypeptide catalyzes 5 consecutive enzymatic reactions in prechorismate polyaromatic amino acid biosynthesis. This chain is Pentafunctional AROM polypeptide, found in Aspergillus flavus (strain ATCC 200026 / FGSC A1120 / IAM 13836 / NRRL 3357 / JCM 12722 / SRRC 167).